Here is a 1024-residue protein sequence, read N- to C-terminus: Eukaryotic translation initiation factor 3 subunit A (1024 aa).

The 178-residue stretch at 331–508 (VISSNAPGTG…QAITFQDDVF (178 aa)) folds into the PCI domain. Coiled coils occupy residues 575–717 (AAED…REEA) and 777–889 (KRRG…RRSR). Basic and acidic residues-rich tracts occupy residues 797 to 866 (KERR…ERRA) and 873 to 886 (DKQRQREEEAEANR). 2 disordered regions span residues 797–973 (KERR…GAYR) and 1001–1024 (AAAAESDGFTEVKKNVYRPPGRRA). 2 stretches are compositionally biased toward low complexity: residues 890 to 906 (AAGTGAAPAQELAAADA) and 946 to 971 (KEAAGGNATAAPSAPAAAPAPASSGA).

This sequence belongs to the eIF-3 subunit A family. In terms of assembly, component of the eukaryotic translation initiation factor 3 (eIF-3) complex.

The protein resides in the cytoplasm. RNA-binding component of the eukaryotic translation initiation factor 3 (eIF-3) complex, which is involved in protein synthesis of a specialized repertoire of mRNAs and, together with other initiation factors, stimulates binding of mRNA and methionyl-tRNAi to the 40S ribosome. The eIF-3 complex specifically targets and initiates translation of a subset of mRNAs involved in cell proliferation. The chain is Eukaryotic translation initiation factor 3 subunit A from Mycosarcoma maydis (Corn smut fungus).